A 221-amino-acid chain; its full sequence is Probable septum site-determining protein MinC (221 aa).

The protein belongs to the MinC family. Interacts with MinD and FtsZ.

In terms of biological role, cell division inhibitor that blocks the formation of polar Z ring septums. Rapidly oscillates between the poles of the cell to destabilize FtsZ filaments that have formed before they mature into polar Z rings. Prevents FtsZ polymerization. The polypeptide is Probable septum site-determining protein MinC (Shewanella loihica (strain ATCC BAA-1088 / PV-4)).